Here is a 442-residue protein sequence, read N- to C-terminus: MHDIKSIRDNPQDFDAALTRRGLSPLSSQLLAIDERRRAAILASEQAQARRNAASREIGEAKKAKDEGRASALMEEVAKLKTTMPELEAAAKQADEELARELSAIPNLPLDEVPDGKDEHDNVERHVFGARRNYAFAPKAHDDIGTALGMDFESAAKLSGARFVVLKKGLARLERAIGQFMLDLHTTEHGYTEVNPPLLVRNDVMFGTGQLPKFEDDQFWAVRGELLIAPDERLKAERLGLIPTAEVALTNLVRESIVDEKELPMRLTALTPCFRAEAGAAGRDTRGMIRQHQFTKVELVSITTPETSKDEHERMLACAEEVLRRLDLHYRVITLCTGDMGFSSQKTYDIEVWMPGQGDGGAFREISSCSVCGDFQARRMDARYRASDGKPRFVHTLNGSGTAVGRALIAVMETYQQADGSIAVPDVLQPYMGGLKVVAADS.

An L-serine-binding site is contributed by 244 to 246 (TAE). ATP is bound at residue 275–277 (RAE). E298 lines the L-serine pocket. 365–368 (EISS) serves as a coordination point for ATP. Position 400 (S400) interacts with L-serine.

Belongs to the class-II aminoacyl-tRNA synthetase family. Type-1 seryl-tRNA synthetase subfamily. Homodimer. The tRNA molecule binds across the dimer.

Its subcellular location is the cytoplasm. It carries out the reaction tRNA(Ser) + L-serine + ATP = L-seryl-tRNA(Ser) + AMP + diphosphate + H(+). The enzyme catalyses tRNA(Sec) + L-serine + ATP = L-seryl-tRNA(Sec) + AMP + diphosphate + H(+). It participates in aminoacyl-tRNA biosynthesis; selenocysteinyl-tRNA(Sec) biosynthesis; L-seryl-tRNA(Sec) from L-serine and tRNA(Sec): step 1/1. In terms of biological role, catalyzes the attachment of serine to tRNA(Ser). Is also able to aminoacylate tRNA(Sec) with serine, to form the misacylated tRNA L-seryl-tRNA(Sec), which will be further converted into selenocysteinyl-tRNA(Sec). The polypeptide is Serine--tRNA ligase (Bradyrhizobium sp. (strain ORS 278)).